Reading from the N-terminus, the 124-residue chain is Small ribosomal subunit protein uS13 (124 aa).

Residues 94 to 124 are disordered; the sequence is RGLPVRGQRTKTNARTRKGPKRTIAGKKKAR.

Belongs to the universal ribosomal protein uS13 family. Part of the 30S ribosomal subunit. Forms a loose heterodimer with protein S19. Forms two bridges to the 50S subunit in the 70S ribosome.

Located at the top of the head of the 30S subunit, it contacts several helices of the 16S rRNA. In the 70S ribosome it contacts the 23S rRNA (bridge B1a) and protein L5 of the 50S subunit (bridge B1b), connecting the 2 subunits; these bridges are implicated in subunit movement. Contacts the tRNAs in the A and P-sites. The protein is Small ribosomal subunit protein uS13 of Mycolicibacterium vanbaalenii (strain DSM 7251 / JCM 13017 / BCRC 16820 / KCTC 9966 / NRRL B-24157 / PYR-1) (Mycobacterium vanbaalenii).